Reading from the N-terminus, the 150-residue chain is MGIQHEFDIIINGDIALRNLQLHRGDNYGCKLKIISNDYKKLKFRFIIRPDWSEIDEVKGLTVFANNYVVKVNKVDDTFYYVIYEAVIHLYNKKTEILIYSDDEKELFKHYYPYISLNMISKKYKVKEENYSSPYIEHPLIPYRDYESMD.

Belongs to the orthopoxvirus OPG027 family.

Functionally, inhibits antiviral activity induced by type I interferons. Does not block signal transduction of IFN, but is important to counteract the host antiviral state induced by a pre-treatment with IFN. The chain is Probable host range protein 2 (OPG027) from Camelpox virus (strain M-96).